Here is a 156-residue protein sequence, read N- to C-terminus: Small ribosomal subunit protein uS7cz/uS7cy (156 aa).

This sequence belongs to the universal ribosomal protein uS7 family. In terms of assembly, part of the 30S ribosomal subunit.

Its subcellular location is the plastid. It localises to the chloroplast. Its function is as follows. One of the primary rRNA binding proteins, it binds directly to 16S rRNA where it nucleates assembly of the head domain of the 30S subunit. This Triticum aestivum (Wheat) protein is Small ribosomal subunit protein uS7cz/uS7cy (rps7-A).